Reading from the N-terminus, the 114-residue chain is uncharacterized protein (114 aa).

Residues 7 to 27 (YIFSFWFFFLVEYVVTFRLFL) form a helical membrane-spanning segment. Residues 90–114 (KNSPEKKKFKRGLPISSKYTDGKKR) form a disordered region.

It is found in the membrane. This is an uncharacterized protein from Saccharomyces cerevisiae (strain ATCC 204508 / S288c) (Baker's yeast).